The following is a 154-amino-acid chain: MRIIEGKLRLDGSEKVAIIASRFNHIITDRLVEGAKDAFLRHGGNEENLDLVLVPGAFELPFALDKALSAQKYNGVCCLGAIIRGSTPHFDYVAAEATKGIANTTLKYQKPVTFGVLTTDTIEQAIERAGSKAGNKGFEAMTGLIELIDLYKGL.

Residues phenylalanine 23, 57–59, and 81–83 each bind 5-amino-6-(D-ribitylamino)uracil; these read AFE and AII. A (2S)-2-hydroxy-3-oxobutyl phosphate-binding site is contributed by 86–87; it reads ST. The active-site Proton donor is the histidine 89. A 5-amino-6-(D-ribitylamino)uracil-binding site is contributed by phenylalanine 114. Residue arginine 128 coordinates (2S)-2-hydroxy-3-oxobutyl phosphate.

It belongs to the DMRL synthase family.

The catalysed reaction is (2S)-2-hydroxy-3-oxobutyl phosphate + 5-amino-6-(D-ribitylamino)uracil = 6,7-dimethyl-8-(1-D-ribityl)lumazine + phosphate + 2 H2O + H(+). Its pathway is cofactor biosynthesis; riboflavin biosynthesis; riboflavin from 2-hydroxy-3-oxobutyl phosphate and 5-amino-6-(D-ribitylamino)uracil: step 1/2. Functionally, catalyzes the formation of 6,7-dimethyl-8-ribityllumazine by condensation of 5-amino-6-(D-ribitylamino)uracil with 3,4-dihydroxy-2-butanone 4-phosphate. This is the penultimate step in the biosynthesis of riboflavin. This chain is 6,7-dimethyl-8-ribityllumazine synthase, found in Nitratiruptor sp. (strain SB155-2).